The primary structure comprises 206 residues: Anti-sigma-W factor RsiW (206 aa).

At 1–87 (MSCPEHIVQL…ASINRWLKAH (87 aa)) the chain is on the cytoplasmic side. Zn(2+)-binding residues include His30, Cys34, and Cys37. Residues 88–108 (PFLVAAALFAILMGGSFFSSW) form a helical membrane-spanning segment. The Extracellular segment spans residues 109-206 (KNDHDFSVSS…SVFGVKESKE (98 aa)).

It belongs to the zinc-associated anti-sigma factor (ZAS) superfamily. Anti-sigma-W factor family. Zn(2+) is required as a cofactor. Is processed by three successive proteolytic events. First, the extracellular region of RsiW is cleaved by PrsW (Site-1 cleavage) in response to cell envelope stresses. Next, it undergoes cleavage at an intramembrane site (Site-2 cleavage) mediated by RasP. This cleavage uncovers a cryptic proteolytic tag with conserved alanine residues in the transmembrane segment, that is recognized mainly by the ClpXP protease, which completely degrades the protein in the cytoplasm and leads to the induction of the sigma-W-controlled genes.

It is found in the membrane. Its function is as follows. Is the anti-sigma factor for SigW. The presence of RsiW leads to the inactivation of SigW, and its proteolytic destruction to sigma-W activation. The sequence is that of Anti-sigma-W factor RsiW (rsiW) from Bacillus licheniformis (strain ATCC 14580 / DSM 13 / JCM 2505 / CCUG 7422 / NBRC 12200 / NCIMB 9375 / NCTC 10341 / NRRL NRS-1264 / Gibson 46).